The primary structure comprises 325 residues: Transcription initiation factor IIB (325 aa).

A TFIIB-type zinc finger spans residues 19-52 (NKLWCMVCRIQDPDIIEDYAKGDLICRGCGVVVG). Positions 23, 26, 44, and 47 each coordinate Zn(2+). 2 tandem repeats follow at residues 131–207 (MADH…IMKE) and 227–303 (FCST…DLYA).

It belongs to the TFIIB family.

The protein resides in the nucleus. Its function is as follows. General transcription factor that plays a role in transcription initiation by RNA polymerase II (Pol II). Involved in the pre-initiation complex (PIC) formation and Pol II recruitment at promoter DNA. This chain is Transcription initiation factor IIB (gtf2b), found in Dictyostelium discoideum (Social amoeba).